Reading from the N-terminus, the 85-residue chain is UPF0335 protein BARBAKC583_0130 (85 aa).

It belongs to the UPF0335 family.

This is UPF0335 protein BARBAKC583_0130 from Bartonella bacilliformis (strain ATCC 35685 / KC583 / Herrer 020/F12,63).